Here is a 182-residue protein sequence, read N- to C-terminus: UPF0397 protein VV2_1534 (182 aa).

5 helical membrane-spanning segments follow: residues 8-28 (VVVIAIGAALYGIGGLPMFGI), 41-61 (AVLALFSVLFGPLVGFLVGFI), 72-92 (WGVWLTWVLGSGIVGLIIGLF), 110-130 (FSLFVVLALLGNVFGYGCSAF), and 146-166 (QLTIIASGNTVLIAIVGYFIL).

The protein belongs to the UPF0397 family.

It is found in the cell membrane. In Vibrio vulnificus (strain CMCP6), this protein is UPF0397 protein VV2_1534.